We begin with the raw amino-acid sequence, 81 residues long: MMKLMLFSIIVILFSLIGSIHGADVPGNYPLDSSDDTYLCAPLGENPFCIKICRKHGVKYGLMLRLPCWCEYFGKIKNVKI.

The N-terminal stretch at 1–22 is a signal peptide; sequence MMKLMLFSIIVILFSLIGSIHG. The 57-residue stretch at 25–81 folds into the LCN-type CS-alpha/beta domain; it reads VPGNYPLDSSDDTYLCAPLGENPFCIKICRKHGVKYGLMLRLPCWCEYFGKIKNVKI. 2 disulfides stabilise this stretch: cysteine 49–cysteine 68 and cysteine 53–cysteine 70.

It belongs to the long (3 C-C) scorpion toxin superfamily. In terms of tissue distribution, expressed by the venom gland.

Its subcellular location is the secreted. In terms of biological role, probable neurotoxin that inhibits ion channels. This Androctonus australis (Sahara scorpion) protein is Toxin-like peptide AaF1CA5.